The sequence spans 227 residues: Acyl-protein thioesterase 1 (227 aa).

Catalysis depends on charge relay system residues Ser119, Asp173, and His207.

The protein belongs to the AB hydrolase superfamily. AB hydrolase 2 family.

It is found in the cytoplasm. It localises to the nucleus. It carries out the reaction S-hexadecanoyl-L-cysteinyl-[protein] + H2O = L-cysteinyl-[protein] + hexadecanoate + H(+). Hydrolyzes fatty acids from S-acylated cysteine residues in proteins with a strong preference for palmitoylated G-alpha proteins over other acyl substrates. Mediates the deacylation of G-alpha proteins such as GPA1 in vivo, but has weak or no activity toward palmitoylated Ras proteins. Has weak lysophospholipase activity in vitro; however such activity may not exist in vivo. The polypeptide is Acyl-protein thioesterase 1 (Saccharomyces cerevisiae (strain ATCC 204508 / S288c) (Baker's yeast)).